The sequence spans 470 residues: Light-independent protochlorophyllide reductase subunit N (470 aa).

Cys23, Cys48, and Cys108 together coordinate [4Fe-4S] cluster.

It belongs to the BchN/ChlN family. Protochlorophyllide reductase is composed of three subunits; ChlL, ChlN and ChlB. Forms a heterotetramer of two ChlB and two ChlN subunits. The cofactor is [4Fe-4S] cluster.

The protein resides in the plastid. The protein localises to the chloroplast. The enzyme catalyses chlorophyllide a + oxidized 2[4Fe-4S]-[ferredoxin] + 2 ADP + 2 phosphate = protochlorophyllide a + reduced 2[4Fe-4S]-[ferredoxin] + 2 ATP + 2 H2O. Its pathway is porphyrin-containing compound metabolism; chlorophyll biosynthesis (light-independent). Functionally, component of the dark-operative protochlorophyllide reductase (DPOR) that uses Mg-ATP and reduced ferredoxin to reduce ring D of protochlorophyllide (Pchlide) to form chlorophyllide a (Chlide). This reaction is light-independent. The NB-protein (ChlN-ChlB) is the catalytic component of the complex. The protein is Light-independent protochlorophyllide reductase subunit N of Zygnema circumcarinatum (Green alga).